The chain runs to 162 residues: Protein cornichon homolog 2 (162 aa).

Topologically, residues 1–10 (MAFTFAAFCY) are cytoplasmic. Residues 11-31 (MLTLVLCASLIFFIIWHIIAF) form a helical membrane-spanning segment. Over 32–72 (DDLRTDFKDPIEQGNPSRARERIKNVERVCCLLRKLVVPEY) the chain is Lumenal. The helical transmembrane segment at 73 to 93 (CIHGLFCLMFMCAAEWVTLGL) threads the bilayer. Residues 94–138 (NIPLLFYHLWRYFHRPADGSEVMFDPVSIMNVDILNYCQKEAWCK) lie on the Cytoplasmic side of the membrane. The helical transmembrane segment at 139–161 (LAFYLLSFFYYLYRVGATVRYVS) threads the bilayer. A topological domain (lumenal) is located at residue A162.

It belongs to the cornichon family.

It is found in the membrane. Its function is as follows. Regulates the trafficking and gating properties of AMPA-selective glutamate receptors (AMPARs). This is Protein cornichon homolog 2 (cnih2) from Xenopus laevis (African clawed frog).